A 200-amino-acid polypeptide reads, in one-letter code: Holliday junction branch migration complex subunit RuvA (200 aa).

The domain I stretch occupies residues 1-64; the sequence is MYAYFRGRVV…EDALQLYGFS (64 aa). The domain II stretch occupies residues 65–143; sequence SEEEKQLFRL…KLSPPGAAAT (79 aa). The flexible linker stretch occupies residues 144-154; sequence PAGAVQCGIRE. The tract at residues 154–200 is domain III; that stretch reads EDATNALLTLGFSRTAAQQAVAGVLEANPGGSVEDVVKSALLAMHNR.

Belongs to the RuvA family. As to quaternary structure, homotetramer. Forms an RuvA(8)-RuvB(12)-Holliday junction (HJ) complex. HJ DNA is sandwiched between 2 RuvA tetramers; dsDNA enters through RuvA and exits via RuvB. An RuvB hexamer assembles on each DNA strand where it exits the tetramer. Each RuvB hexamer is contacted by two RuvA subunits (via domain III) on 2 adjacent RuvB subunits; this complex drives branch migration. In the full resolvosome a probable DNA-RuvA(4)-RuvB(12)-RuvC(2) complex forms which resolves the HJ.

It localises to the cytoplasm. The RuvA-RuvB-RuvC complex processes Holliday junction (HJ) DNA during genetic recombination and DNA repair, while the RuvA-RuvB complex plays an important role in the rescue of blocked DNA replication forks via replication fork reversal (RFR). RuvA specifically binds to HJ cruciform DNA, conferring on it an open structure. The RuvB hexamer acts as an ATP-dependent pump, pulling dsDNA into and through the RuvAB complex. HJ branch migration allows RuvC to scan DNA until it finds its consensus sequence, where it cleaves and resolves the cruciform DNA. The polypeptide is Holliday junction branch migration complex subunit RuvA (Chlorobium luteolum (strain DSM 273 / BCRC 81028 / 2530) (Pelodictyon luteolum)).